The sequence spans 163 residues: 6,7-dimethyl-8-ribityllumazine synthase (163 aa).

5-amino-6-(D-ribitylamino)uracil contacts are provided by residues Phe27, 58 to 60, and 87 to 89; these read ALE and CVV. 92-93 contacts (2S)-2-hydroxy-3-oxobutyl phosphate; the sequence is DT. His95 (proton donor) is an active-site residue. A 5-amino-6-(D-ribitylamino)uracil-binding site is contributed by Asn120. A (2S)-2-hydroxy-3-oxobutyl phosphate-binding site is contributed by Arg134.

It belongs to the DMRL synthase family.

The catalysed reaction is (2S)-2-hydroxy-3-oxobutyl phosphate + 5-amino-6-(D-ribitylamino)uracil = 6,7-dimethyl-8-(1-D-ribityl)lumazine + phosphate + 2 H2O + H(+). The protein operates within cofactor biosynthesis; riboflavin biosynthesis; riboflavin from 2-hydroxy-3-oxobutyl phosphate and 5-amino-6-(D-ribitylamino)uracil: step 1/2. Functionally, catalyzes the formation of 6,7-dimethyl-8-ribityllumazine by condensation of 5-amino-6-(D-ribitylamino)uracil with 3,4-dihydroxy-2-butanone 4-phosphate. This is the penultimate step in the biosynthesis of riboflavin. The chain is 6,7-dimethyl-8-ribityllumazine synthase from Nitrobacter hamburgensis (strain DSM 10229 / NCIMB 13809 / X14).